The chain runs to 552 residues: Serine palmitoyltransferase 3 (552 aa).

The interval 1-29 (MANPGGGAVCNGKLHNHKKQSNGSQSRNC) is disordered. Residues 59–79 (PLHVMVFTYMGYGIGTLFGYL) form a helical membrane-spanning segment. Position 371 is an N6-(pyridoxal phosphate)lysine (Lys371).

It belongs to the class-II pyridoxal-phosphate-dependent aminotransferase family. In terms of assembly, component of the serine palmitoyltransferase (SPT) complex, which is composed of SPTLC1, SPTLC2 or SPTLC3 and SPTSSA or SPTSSB. The heterodimer consisting of SPTLC1 and SPTLC2/SPTLC3 forms the catalytic core of the enzyme, while SPTSSA or SPTSSB subunits determine substrate specificity. SPT also interacts with ORMDL proteins, especially ORMDL3, which negatively regulate SPT activity in the presence of ceramides. Pyridoxal 5'-phosphate serves as cofactor. Expressed in most tissues, except peripheral blood cells and bone marrow, with highest levels in heart, kidney, liver, uterus and skin.

The protein localises to the endoplasmic reticulum membrane. It catalyses the reaction L-serine + hexadecanoyl-CoA + H(+) = 3-oxosphinganine + CO2 + CoA. The enzyme catalyses dodecanoyl-CoA + L-serine + H(+) = 3-oxotetradecasphinganine + CO2 + CoA. It carries out the reaction tetradecanoyl-CoA + L-serine + H(+) = 3-oxohexadecasphinganine + CO2 + CoA. The catalysed reaction is octadecanoyl-CoA + L-serine + H(+) = 3-oxoeicosasphinganine + CO2 + CoA. Its pathway is lipid metabolism; sphingolipid metabolism. Its activity is regulated as follows. SPT complex catalytic activity is negatively regulated by ORMDL proteins, including ORMDL3, in the presence of ceramides. This mechanism allows to maintain ceramide levels at sufficient concentrations for the production of complex sphingolipids, but which prevents the accumulation of ceramides to levels that trigger apoptosis. Its function is as follows. Component of the serine palmitoyltransferase multisubunit enzyme (SPT) that catalyzes the initial and rate-limiting step in sphingolipid biosynthesis by condensing L-serine and activated acyl-CoA (most commonly palmitoyl-CoA) to form long-chain bases. The SPT complex is composed of SPTLC1, SPTLC2 or SPTLC3 and SPTSSA or SPTSSB. Within this complex, the heterodimer consisting of SPTLC1 and SPTLC2/SPTLC3 forms the catalytic core. The composition of the serine palmitoyltransferase (SPT) complex determines the substrate preference. The SPTLC1-SPTLC2-SPTSSA complex shows a strong preference for C16-CoA substrate, while the SPTLC1-SPTLC3-SPTSSA isozyme uses both C14-CoA and C16-CoA as substrates, with a slight preference for C14-CoA. The SPTLC1-SPTLC2-SPTSSB complex shows a strong preference for C18-CoA substrate, while the SPTLC1-SPTLC3-SPTSSB isozyme displays an ability to use a broader range of acyl-CoAs, without apparent preference. This chain is Serine palmitoyltransferase 3, found in Homo sapiens (Human).